Here is a 207-residue protein sequence, read N- to C-terminus: Dephospho-CoA kinase (207 aa).

Residues 10–207 (ILGLTGGIGS…FYLTLRGGQS (198 aa)) enclose the DPCK domain. 18 to 23 (GSGKSA) contributes to the ATP binding site.

Belongs to the CoaE family.

It is found in the cytoplasm. It catalyses the reaction 3'-dephospho-CoA + ATP = ADP + CoA + H(+). The protein operates within cofactor biosynthesis; coenzyme A biosynthesis; CoA from (R)-pantothenate: step 5/5. Functionally, catalyzes the phosphorylation of the 3'-hydroxyl group of dephosphocoenzyme A to form coenzyme A. The chain is Dephospho-CoA kinase from Pseudomonas savastanoi pv. phaseolicola (strain 1448A / Race 6) (Pseudomonas syringae pv. phaseolicola (strain 1448A / Race 6)).